The following is a 1412-amino-acid chain: DNA-directed RNA polymerase subunit beta' (1412 aa).

Positions 70, 72, 85, and 88 each coordinate Zn(2+). Mg(2+)-binding residues include D460, D462, and D464. Zn(2+)-binding residues include C819, C893, C900, and C903. Residues 1392 to 1412 (EEAFEFGTPSAPAEEPQHPAE) form a disordered region.

It belongs to the RNA polymerase beta' chain family. The RNAP catalytic core consists of 2 alpha, 1 beta, 1 beta' and 1 omega subunit. When a sigma factor is associated with the core the holoenzyme is formed, which can initiate transcription. Mg(2+) serves as cofactor. It depends on Zn(2+) as a cofactor.

The enzyme catalyses RNA(n) + a ribonucleoside 5'-triphosphate = RNA(n+1) + diphosphate. In terms of biological role, DNA-dependent RNA polymerase catalyzes the transcription of DNA into RNA using the four ribonucleoside triphosphates as substrates. This Burkholderia mallei (strain NCTC 10247) protein is DNA-directed RNA polymerase subunit beta'.